The primary structure comprises 302 residues: MTAPERVGAGPGFAPGALTVHHHPDELAKVTRALRATGRRITLVPTMGALHEGHLELIRRARRDSNSVVVVSIFVNPLQFGPGEDFTSYPRTFETDVEACRAEGVELVFAPDRDDVYGPDPQITVHPGPLGDELEGASRPGHFAGVLTIVAKLLGIVRPDLALFGEKDYQQLVLIRRMARELNIDTAIQGIPIVRAPDGLALSSRNVYLSEEERGAALALSAALAAGAHAGREGAEAVLRAAREVLATEPLVRLDYLELRDTELGAAPAEGEARLLVAAKVGETRLIDNALVLLGDQGDSRP.

47 to 54 (MGALHEGH) contributes to the ATP binding site. His54 serves as the catalytic Proton donor. Gln79 contacts (R)-pantoate. Gln79 serves as a coordination point for beta-alanine. An ATP-binding site is contributed by 165 to 168 (GEKD). Position 171 (Gln171) interacts with (R)-pantoate. ATP contacts are provided by residues Val194 and 202–205 (LSSR).

The protein belongs to the pantothenate synthetase family. Homodimer.

It is found in the cytoplasm. The enzyme catalyses (R)-pantoate + beta-alanine + ATP = (R)-pantothenate + AMP + diphosphate + H(+). The protein operates within cofactor biosynthesis; (R)-pantothenate biosynthesis; (R)-pantothenate from (R)-pantoate and beta-alanine: step 1/1. In terms of biological role, catalyzes the condensation of pantoate with beta-alanine in an ATP-dependent reaction via a pantoyl-adenylate intermediate. This Saccharopolyspora erythraea (strain ATCC 11635 / DSM 40517 / JCM 4748 / NBRC 13426 / NCIMB 8594 / NRRL 2338) protein is Pantothenate synthetase.